Consider the following 182-residue polypeptide: Homeobox expressed in ES cells 1-A (182 aa).

Positions tyrosine 103–serine 163 form a DNA-binding region, homeobox.

Belongs to the ANF homeobox family. In terms of tissue distribution, initially expressed in the anterior dorsal region of early embryos and later exclusively in the primordium of the anterior pituitary gland.

Its subcellular location is the nucleus. Functionally, appears to be involved in the regional specification of the anterior head of Xenopus embryos. The sequence is that of Homeobox expressed in ES cells 1-A (hesx1-a) from Xenopus laevis (African clawed frog).